The chain runs to 260 residues: DNA repair protein RecO (260 aa).

The protein belongs to the RecO family.

Functionally, involved in DNA repair and RecF pathway recombination. In Streptococcus suis (strain 98HAH33), this protein is DNA repair protein RecO.